We begin with the raw amino-acid sequence, 238 residues long: Lactate utilization protein A (238 aa).

Belongs to the LutA/YkgE family.

Is involved in L-lactate degradation and allows cells to grow with lactate as the sole carbon source. The polypeptide is Lactate utilization protein A (Bacillus licheniformis (strain ATCC 14580 / DSM 13 / JCM 2505 / CCUG 7422 / NBRC 12200 / NCIMB 9375 / NCTC 10341 / NRRL NRS-1264 / Gibson 46)).